A 316-amino-acid polypeptide reads, in one-letter code: Thiamine-monophosphate kinase (316 aa).

Residues D26, T49, and D50 each contribute to the Mg(2+) site. Residue D57 coordinates substrate. Position 79 (D79) interacts with Mg(2+). Residues Y109, 126-127 (GD), and R151 contribute to the ATP site. D127 contacts Mg(2+). A Mg(2+)-binding site is contributed by D198. Residue S200 participates in ATP binding. A Mg(2+)-binding site is contributed by D201. Substrate-binding residues include E251 and F305.

The protein belongs to the thiamine-monophosphate kinase family.

The enzyme catalyses thiamine phosphate + ATP = thiamine diphosphate + ADP. It functions in the pathway cofactor biosynthesis; thiamine diphosphate biosynthesis; thiamine diphosphate from thiamine phosphate: step 1/1. Functionally, catalyzes the ATP-dependent phosphorylation of thiamine-monophosphate (TMP) to form thiamine-pyrophosphate (TPP), the active form of vitamin B1. The protein is Thiamine-monophosphate kinase of Rhodopirellula baltica (strain DSM 10527 / NCIMB 13988 / SH1).